Here is a 121-residue protein sequence, read N- to C-terminus: Conopressin-conophysin (121 aa).

Residues 1 to 20 (MGRLTMALCWLLLLLLTTQA) form the signal peptide. A disulfide bridge links Cys-21 with Cys-26. Pro-27 is modified (4-hydroxyproline; partial; in Conopressin-ba1c). Gly-29 is subject to Glycine amide. Intrachain disulfides connect Cys-43–Cys-83, Cys-46–Cys-57, Cys-51–Cys-73, Cys-58–Cys-63, Cys-90–Cys-108, Cys-102–Cys-120, and Cys-109–Cys-114.

Belongs to the vasopressin/oxytocin family. Expressed by the venom duct.

The protein localises to the secreted. In Conus bayani (Bayan's cone), this protein is Conopressin-conophysin.